A 172-amino-acid chain; its full sequence is Large ribosomal subunit protein uL10 (172 aa).

The protein belongs to the universal ribosomal protein uL10 family. In terms of assembly, part of the ribosomal stalk of the 50S ribosomal subunit. The N-terminus interacts with L11 and the large rRNA to form the base of the stalk. The C-terminus forms an elongated spine to which L12 dimers bind in a sequential fashion forming a multimeric L10(L12)X complex.

Its function is as follows. Forms part of the ribosomal stalk, playing a central role in the interaction of the ribosome with GTP-bound translation factors. In Brucella abortus (strain S19), this protein is Large ribosomal subunit protein uL10.